Consider the following 257-residue polypeptide: Type I iodothyronine deiodinase (257 aa).

Over Met1–Arg12 the chain is Extracellular. Residues Phe13–Trp33 form a helical; Signal-anchor for type III membrane protein membrane-spanning segment. At Pro34–Leu257 the chain is on the cytoplasmic side. The active site involves Sec126. Residue Sec126 is a non-standard amino acid, selenocysteine.

This sequence belongs to the iodothyronine deiodinase family. As to quaternary structure, predominantly monomer. Can form homodimers but homodimerization is not essential for enzyme activity. Liver specific.

The protein localises to the cell membrane. It is found in the endoplasmic reticulum membrane. The protein resides in the basolateral cell membrane. It carries out the reaction 3,3',5-triiodo-L-thyronine + iodide + A + H(+) = L-thyroxine + AH2. The catalysed reaction is 3,3',5'-triiodo-L-thyronine + iodide + A + H(+) = L-thyroxine + AH2. The enzyme catalyses 3,3'-diiodo-L-thyronine + iodide + A + H(+) = 3,3',5'-triiodo-L-thyronine + AH2. It catalyses the reaction 3,3'-diiodo-L-thyronine + iodide + A + H(+) = 3,3',5-triiodo-L-thyronine + AH2. It carries out the reaction 3'-iodo-L-thyronine + iodide + A + H(+) = 3',5'-diiodo-L-thyronine + AH2. The catalysed reaction is 3-iodo-L-thyronine + iodide + A + H(+) = 3,5-diiodo-L-thyronine + AH2. The enzyme catalyses 3-iodo-L-thyronine + iodide + A + H(+) = 3,3'-diiodo-L-thyronine + AH2. It catalyses the reaction 3,3'-diiodothyronamine + iodide + A + H(+) = 3,3',5'-triiodothyronamine + AH2. It carries out the reaction 3'-iodothyronamine + iodide + A + H(+) = 3',5'-diiodothyronamine + AH2. The catalysed reaction is 3-iodothyronamine + iodide + A + H(+) = 3,3'-diiodothyronamine + AH2. The enzyme catalyses 3,3'-diiodothyronamine + iodide + A + H(+) = 3,3',5-triiodothyronamine + AH2. It catalyses the reaction 3-iodothyronamine + iodide + A + H(+) = 3,5-diiodothyronamine + AH2. It carries out the reaction 3,3'-diiodo-L-thyronine sulfate + iodide + A + H(+) = 3,3',5'-triiodo-L-thyronine sulfate + AH2. The catalysed reaction is 3,3',5'-triiodo-L-thyronine sulfate + iodide + A + H(+) = L-thyroxine sulfate + AH2. The enzyme catalyses 3,3'-diiodo-L-thyronine sulfate + iodide + A + H(+) = 3,3',5-triiodo-L-thyronine sulfate + AH2. Its function is as follows. Plays a crucial role in the metabolism of thyroid hormones (TH) and has specific roles in TH activation and inactivation by deiodination. Catalyzes the deiodination of L-thyroxine (T4) to 3,5,3'-triiodothyronine (T3) and 3',5'-diiodothyronine (3',5'-T2) to 3'-monoiodothyronine (3'-T1) via outer-ring deiodination (ORD). Catalyzes the deiodination of T4 to 3,3',5'-triiodothyronine (rT3), T3 to 3,3'-diiodothyronine (3,3'-T2), 3,5-diiodothyronine (3,5-T2) to 3-monoiodothyronine (3-T1) and 3,3'-T2 to 3-T1 via inner-ring deiodination (IRD). Catalyzes the deiodination of rT3 to 3,3'-T2 via ORD. Catalyzes the phenolic ring deiodinations of 3,3',5'-triiodothyronamine, 3',5'-diiodothyronamine and 3,3'-diiodothyronamine as well as tyrosyl ring deiodinations of 3,5,3'-triiodothyronamine and 3,5-diiodothyronamine. Catalyzes the deiodination of L-thyroxine sulfate and 3,3',5-triiodo-L-thyronine sulfate via IRD and of 3,3',5'-triiodo-L-thyronine sulfate via ORD. The polypeptide is Type I iodothyronine deiodinase (DIO1) (Suncus murinus (Asian house shrew)).